The following is a 176-amino-acid chain: MSKVRKNEEALSEVLVDVNRVTKVVKGGRRFAFSAYVVVGDKAGRVGAGHGKAKEVNEAREKAKQAAKKKMMKVSLYQNRTIHHDVIGRSGAAKVVLRRAKAGTGVIAGGSMRAIFDSLGVHDIVAKSIGSTNVYTMIAATFDALKKLSSPKSIAARRDKKMNEIFIKSSDIQVNE.

The region spanning 11–74 (LSEVLVDVNR…QAAKKKMMKV (64 aa)) is the S5 DRBM domain.

The protein belongs to the universal ribosomal protein uS5 family. In terms of assembly, part of the 30S ribosomal subunit. Contacts proteins S4 and S8.

In terms of biological role, with S4 and S12 plays an important role in translational accuracy. Its function is as follows. Located at the back of the 30S subunit body where it stabilizes the conformation of the head with respect to the body. The polypeptide is Small ribosomal subunit protein uS5 (Rickettsia bellii (strain RML369-C)).